The primary structure comprises 78 residues: HssA/B-like protein 30 (78 aa).

Residues methionine 1–glycine 32 are disordered.

The protein belongs to the hssA/B family.

The sequence is that of HssA/B-like protein 30 (hssl30) from Dictyostelium discoideum (Social amoeba).